A 459-amino-acid polypeptide reads, in one-letter code: Putrescine aminotransferase (459 aa).

Pyridoxal 5'-phosphate-binding positions include 150–151 (GT) and Gln274. N6-(pyridoxal phosphate)lysine is present on Lys300. Pyridoxal 5'-phosphate is bound at residue Thr332.

Belongs to the class-III pyridoxal-phosphate-dependent aminotransferase family. Putrescine aminotransferase subfamily. It depends on pyridoxal 5'-phosphate as a cofactor.

It catalyses the reaction an alkane-alpha,omega-diamine + 2-oxoglutarate = an omega-aminoaldehyde + L-glutamate. It carries out the reaction putrescine + 2-oxoglutarate = 1-pyrroline + L-glutamate + H2O. The catalysed reaction is cadaverine + 2-oxoglutarate = 5-aminopentanal + L-glutamate. Its pathway is amine and polyamine degradation; putrescine degradation; 4-aminobutanal from putrescine (transaminase route): step 1/1. In terms of biological role, catalyzes the aminotransferase reaction from putrescine to 2-oxoglutarate, leading to glutamate and 4-aminobutanal, which spontaneously cyclizes to form 1-pyrroline. This is the first step in one of two pathways for putrescine degradation, where putrescine is converted into 4-aminobutanoate (gamma-aminobutyrate or GABA) via 4-aminobutanal. Also functions as a cadaverine transaminase in a a L-lysine degradation pathway to succinate that proceeds via cadaverine, glutarate and L-2-hydroxyglutarate. In Escherichia coli O8 (strain IAI1), this protein is Putrescine aminotransferase.